A 733-amino-acid chain; its full sequence is Photosystem I P700 chlorophyll a apoprotein A2 (733 aa).

8 consecutive transmembrane segments (helical) span residues 46 to 69, 135 to 158, 175 to 199, 273 to 291, 330 to 353, 369 to 395, 417 to 439, and 516 to 534; these read IFAS…FHVA, LYQG…LHLQ, LNHH…HVAI, IAHH…GHMY, LHFQ…QHMY, AALY…IFFV, ALIS…LYVH, and FLVH…LILV. Cysteine 558 and cysteine 567 together coordinate [4Fe-4S] cluster. Transmembrane regions (helical) follow at residues 574–595 and 642–664; these read AFYL…YWHW and LSVW…MFLI. Chlorophyll a is bound by residues histidine 653, methionine 661, and tyrosine 669. Residue tryptophan 670 participates in phylloquinone binding. The helical transmembrane segment at 706 to 726 threads the bilayer; it reads LVGLAHFTVGYVLTYAAFLIA.

It belongs to the PsaA/PsaB family. As to quaternary structure, the PsaA/B heterodimer binds the P700 chlorophyll special pair and subsequent electron acceptors. PSI consists of a core antenna complex that captures photons, and an electron transfer chain that converts photonic excitation into a charge separation. The cyanobacterial PSI reaction center is composed of one copy each of PsaA,B,C,D,E,F,I,J,K,L,M and X, and forms trimeric complexes. PSI electron transfer chain: 5 chlorophyll a, 1 chlorophyll a', 2 phylloquinones and 3 4Fe-4S clusters. PSI core antenna: 90 chlorophyll a, 22 carotenoids, 3 phospholipids and 1 galactolipid. P700 is a chlorophyll a/chlorophyll a' dimer, A0 is one or more chlorophyll a, A1 is one or both phylloquinones and FX is a shared 4Fe-4S iron-sulfur center. is required as a cofactor.

Its subcellular location is the cellular thylakoid membrane. The catalysed reaction is reduced [plastocyanin] + hnu + oxidized [2Fe-2S]-[ferredoxin] = oxidized [plastocyanin] + reduced [2Fe-2S]-[ferredoxin]. PsaA and PsaB bind P700, the primary electron donor of photosystem I (PSI), as well as the electron acceptors A0, A1 and FX. PSI is a plastocyanin/cytochrome c6-ferredoxin oxidoreductase, converting photonic excitation into a charge separation, which transfers an electron from the donor P700 chlorophyll pair to the spectroscopically characterized acceptors A0, A1, FX, FA and FB in turn. Oxidized P700 is reduced on the lumenal side of the thylakoid membrane by plastocyanin or cytochrome c6. This is Photosystem I P700 chlorophyll a apoprotein A2 from Picosynechococcus sp. (strain ATCC 27264 / PCC 7002 / PR-6) (Agmenellum quadruplicatum).